A 956-amino-acid chain; its full sequence is Run domain Beclin-1-interacting and cysteine-rich domain-containing protein (956 aa).

In terms of domain architecture, RUN spans Trp49 to Ser190. Residues Ser50 to Pro181 form an interaction with PIK3C3 region. Ser198 is modified (phosphoserine). Residues Ser205–Ala437 are interaction with YWHAB. Residues Ser233–His242 are compositionally biased toward low complexity. Residues Ser233 to Gly423 form a disordered region. Phosphoserine is present on residues Ser250 and Ser268. Over residues Ala270 to Asp319 the composition is skewed to polar residues. Residues Thr302–Arg585 form an interaction with UVRAG region. Positions Ala339–Leu371 are enriched in low complexity. Positions Gln379–Gln395 are enriched in polar residues. Residues Ser390, Ser412, Ser513, and Ser547 each carry the phosphoserine modification. Positions Ala490–Glu542 are interaction with BECN1. A compositionally biased stretch (low complexity) spans Ser547–Ser566. Positions Ser547–Ile579 are disordered. An interaction with CYBA region spans residues Ser552–Ser609. Residues Ser570–Ile579 show a composition bias toward acidic residues. Ser655 carries the phosphoserine modification. An interaction with CARD9 region spans residues Pro656–Ser744. An interaction with Rab7 region spans residues Cys705–Thr956.

As to quaternary structure, associates with PI3K (PI3KC3/PI3K-III/class III phosphatidylinositol 3-kinase) complex II (PI3KC3-C2) in which the core composed of the catalytic subunit PIK3C3, the regulatory subunit PIK3R4 and BECN1 is associated with UVRAG; in the complex interacts directly with PI3KC3 and UVRAG. Interacts with Rab7 (RAB7A or RAB7B) (GTP-bound form); Rab7 and UVRAG compete for RUBCN binding; can interact simultaneously with Rab7 and the PI3K complex. Interacts with CYBA and CYBB; indicative for the association with the CYBA:CYBB NADPH oxidase heterodimer. Interacts with NOX4 and probably associates with the CYBA:NOX4 complex. Interacts with YWHAB and CARD9 in a competitive and stimulation-dependent manner; RUBCN exchanges interaction from YWHAB to CARD9 upon stimulation with beta-1,3-glucan.

The protein resides in the late endosome. It localises to the lysosome. Its subcellular location is the early endosome. Inhibits PIK3C3 activity; under basal conditions negatively regulates PI3K complex II (PI3KC3-C2) function in autophagy. Negatively regulates endosome maturation and degradative endocytic trafficking and impairs autophagosome maturation process. Can sequester UVRAG from association with a class C Vps complex (possibly the HOPS complex) and negatively regulates Rab7 activation. Functionally, involved in regulation of pathogen-specific host defense of activated macrophages. Following bacterial infection promotes NADH oxidase activity by association with CYBA thereby affecting TLR2 signaling and probably other TLR-NOX pathways. Stabilizes the CYBA:CYBB NADPH oxidase heterodimer, increases its association with TLR2 and its phagosome trafficking to induce antimicrobial burst of ROS and production of inflammatory cytokines. Following fungal or viral infection (implicating CLEC7A (dectin-1)-mediated myeloid cell activation or RIGI-dependent sensing of RNA viruses) negatively regulates pro-inflammatory cytokine production by association with CARD9 and sequestering it from signaling complexes. In Mus musculus (Mouse), this protein is Run domain Beclin-1-interacting and cysteine-rich domain-containing protein.